The sequence spans 142 residues: Large ribosomal subunit protein uL13 (142 aa).

It belongs to the universal ribosomal protein uL13 family. In terms of assembly, part of the 50S ribosomal subunit.

This protein is one of the early assembly proteins of the 50S ribosomal subunit, although it is not seen to bind rRNA by itself. It is important during the early stages of 50S assembly. This is Large ribosomal subunit protein uL13 from Paraburkholderia phytofirmans (strain DSM 17436 / LMG 22146 / PsJN) (Burkholderia phytofirmans).